The chain runs to 271 residues: Acyl-[acyl-carrier-protein]--UDP-N-acetylglucosamine O-acyltransferase (271 aa).

Belongs to the transferase hexapeptide repeat family. LpxA subfamily. Homotrimer.

The protein localises to the cytoplasm. The enzyme catalyses a (3R)-hydroxyacyl-[ACP] + UDP-N-acetyl-alpha-D-glucosamine = a UDP-3-O-[(3R)-3-hydroxyacyl]-N-acetyl-alpha-D-glucosamine + holo-[ACP]. It participates in glycolipid biosynthesis; lipid IV(A) biosynthesis; lipid IV(A) from (3R)-3-hydroxytetradecanoyl-[acyl-carrier-protein] and UDP-N-acetyl-alpha-D-glucosamine: step 1/6. Its function is as follows. Involved in the biosynthesis of lipid A, a phosphorylated glycolipid that anchors the lipopolysaccharide to the outer membrane of the cell. The sequence is that of Acyl-[acyl-carrier-protein]--UDP-N-acetylglucosamine O-acyltransferase from Rhizobium rhizogenes (strain K84 / ATCC BAA-868) (Agrobacterium radiobacter).